We begin with the raw amino-acid sequence, 241 residues long: Probable WRKY transcription factor 63 (241 aa).

Positions Asn56 to Ser79 are disordered. The segment at residues Ser97–Phe165 is a DNA-binding region (WRKY).

This sequence belongs to the WRKY group III family.

The protein resides in the nucleus. Its function is as follows. Transcription factor. Interacts specifically with the W box (5'-(T)TGAC[CT]-3'), a frequently occurring elicitor-responsive cis-acting element. This Arabidopsis thaliana (Mouse-ear cress) protein is Probable WRKY transcription factor 63 (WRKY63).